A 251-amino-acid chain; its full sequence is MIGKTITNFSPLTEGILLKRYKRFLADVELDTGEVVTAHCANTGPMKGVLHVGGRVRLRHSPSPSRKLSWSWEQAQVPSGQSFSWVGVNTALPNKLVRLAIEAGCLKQELGEIFEIKNEVTYGVARKSRIDLLLTPHFNNSDSRKIFVEIKNTTWAKGSTAVFPDTVTTRGQKHLQEMINEVPSSRAVLVPCISRNDIEVFVPGDSADAKYGDLFRLALNAGVEVIPCAFDFHLDCITWEGTKPFLKGENF.

This sequence belongs to the SfsA family.

The protein is Sugar fermentation stimulation protein homolog of Prochlorococcus marinus (strain SARG / CCMP1375 / SS120).